The chain runs to 335 residues: Probable deoxyhypusine synthase (335 aa).

Catalysis depends on K307, which acts as the Nucleophile.

The protein belongs to the deoxyhypusine synthase family. NAD(+) is required as a cofactor.

The catalysed reaction is [eIF5A protein]-L-lysine + spermidine = [eIF5A protein]-deoxyhypusine + propane-1,3-diamine. It functions in the pathway protein modification; eIF5A hypusination. Its function is as follows. Catalyzes the NAD-dependent oxidative cleavage of spermidine and the subsequent transfer of the butylamine moiety of spermidine to the epsilon-amino group of a specific lysine residue of the eIF-5A precursor protein to form the intermediate deoxyhypusine residue. This is Probable deoxyhypusine synthase (dys) from Pyrococcus abyssi (strain GE5 / Orsay).